The primary structure comprises 180 residues: ATP synthase subunit delta (180 aa).

It belongs to the ATPase delta chain family. As to quaternary structure, F-type ATPases have 2 components, F(1) - the catalytic core - and F(0) - the membrane proton channel. F(1) has five subunits: alpha(3), beta(3), gamma(1), delta(1), epsilon(1). F(0) has three main subunits: a(1), b(2) and c(10-14). The alpha and beta chains form an alternating ring which encloses part of the gamma chain. F(1) is attached to F(0) by a central stalk formed by the gamma and epsilon chains, while a peripheral stalk is formed by the delta and b chains.

It is found in the cell inner membrane. Its function is as follows. F(1)F(0) ATP synthase produces ATP from ADP in the presence of a proton or sodium gradient. F-type ATPases consist of two structural domains, F(1) containing the extramembraneous catalytic core and F(0) containing the membrane proton channel, linked together by a central stalk and a peripheral stalk. During catalysis, ATP synthesis in the catalytic domain of F(1) is coupled via a rotary mechanism of the central stalk subunits to proton translocation. This protein is part of the stalk that links CF(0) to CF(1). It either transmits conformational changes from CF(0) to CF(1) or is implicated in proton conduction. The sequence is that of ATP synthase subunit delta from Geotalea uraniireducens (strain Rf4) (Geobacter uraniireducens).